The primary structure comprises 291 residues: MFEGAMPALITPFTKDDRIDREGLQRNIEFVEEGGVAGIVPCGTTGESATLSALEHEEVIDIAVECSKVPVIAGTGSNNTGEALQFTKHAADAGVDGVLLISPYYNKPNPAGLLTHFKKIAEAVDVPMVMYNIPSRTGQDMPLEVIVELAKVENIVGIKEASGNIGKVSQILENTIDEDFVVISGEDNLTLPILSVGGQGVISVAANIVPDRMSRMVNAALAGDYETARKIHFEIAPLIRALFLETNPIPVKKAAELAGLASGNLRLPLAPLSETNTQKVADELRKLGVIE.

Threonine 45 serves as a coordination point for pyruvate. The active-site Proton donor/acceptor is tyrosine 131. The active-site Schiff-base intermediate with substrate is lysine 159. Isoleucine 202 serves as a coordination point for pyruvate.

It belongs to the DapA family. As to quaternary structure, homotetramer; dimer of dimers.

It is found in the cytoplasm. It catalyses the reaction L-aspartate 4-semialdehyde + pyruvate = (2S,4S)-4-hydroxy-2,3,4,5-tetrahydrodipicolinate + H2O + H(+). It functions in the pathway amino-acid biosynthesis; L-lysine biosynthesis via DAP pathway; (S)-tetrahydrodipicolinate from L-aspartate: step 3/4. Functionally, catalyzes the condensation of (S)-aspartate-beta-semialdehyde [(S)-ASA] and pyruvate to 4-hydroxy-tetrahydrodipicolinate (HTPA). The protein is 4-hydroxy-tetrahydrodipicolinate synthase of Methanosarcina barkeri (strain Fusaro / DSM 804).